Here is a 589-residue protein sequence, read N- to C-terminus: Probable translation initiation factor IF-2 (589 aa).

Residues 3-224 (VRSPFVVVMG…AGVSQRFIPR (222 aa)) form the tr-type G domain. Residues 12-19 (GHVDVGKT) are G1. 12–19 (GHVDVGKT) serves as a coordination point for GTP. The interval 37 to 41 (MITQH) is G2. Residues 78–81 (DTPG) are G3. GTP-binding positions include 78-82 (DTPGH) and 132-135 (NKLD). Positions 132–135 (NKLD) are G4. Residues 200–202 (SAV) form a G5 region.

This sequence belongs to the TRAFAC class translation factor GTPase superfamily. Classic translation factor GTPase family. IF-2 subfamily.

Function in general translation initiation by promoting the binding of the formylmethionine-tRNA to ribosomes. Seems to function along with eIF-2. The sequence is that of Probable translation initiation factor IF-2 from Pyrobaculum neutrophilum (strain DSM 2338 / JCM 9278 / NBRC 100436 / V24Sta) (Thermoproteus neutrophilus).